Here is a 279-residue protein sequence, read N- to C-terminus: Methyltransferase ausD (279 aa).

Residues 124–125, 152–153, and arginine 244 contribute to the S-adenosyl-L-methionine site; these read DL and DI.

Belongs to the class I-like SAM-binding methyltransferase superfamily. In terms of assembly, homodimer.

It participates in secondary metabolite biosynthesis; terpenoid biosynthesis. Methyltransferase; part of the gene cluster that mediates the biosynthesis of calidodehydroaustin, a fungal meroterpenoid. The first step of the pathway is the synthesis of 3,5-dimethylorsellinic acid by the polyketide synthase ausA. 3,5-dimethylorsellinic acid is then prenylated by the polyprenyl transferase ausN. Further epoxidation by the FAD-dependent monooxygenase ausM and cyclization by the probable terpene cyclase ausL lead to the formation of protoaustinoid A. Protoaustinoid A is then oxidized to spiro-lactone preaustinoid A3 by the combined action of the FAD-binding monooxygenases ausB and ausC, and the dioxygenase ausE. Acid-catalyzed keto-rearrangement and ring contraction of the tetraketide portion of preaustinoid A3 by ausJ lead to the formation of preaustinoid A4. The aldo-keto reductase ausK, with the help of ausH, is involved in the next step by transforming preaustinoid A4 into isoaustinone which is in turn hydroxylated by the P450 monooxygenase ausI to form austinolide. The cytochrome P450 monooxygenase ausG modifies austinolide to austinol. Austinol is further acetylated to austin by the O-acetyltransferase ausP, which spontaneously changes to dehydroaustin. The cytochrome P450 monooxygenase ausR then converts dehydroaustin is into 7-dehydrodehydroaustin. The hydroxylation catalyzed by ausR permits the O-acetyltransferase ausQ to add an additional acetyl group to the molecule, leading to the formation of acetoxydehydroaustin. The short chain dehydrogenase ausT catalyzes the reduction of the double bond present between carbon atoms 1 and 2 to convert 7-dehydrodehydroaustin into 1,2-dihydro-7-hydroxydehydroaustin. AusQ catalyzes not only an acetylation reaction but also the addition of the PKS ausV diketide product to 1,2-dihydro-7-hydroxydehydroaustin, forming precalidodehydroaustin. Finally, the iron/alpha-ketoglutarate-dependent dioxygenase converts precalidodehydroaustin into calidodehydroaustin. This chain is Methyltransferase ausD, found in Aspergillus calidoustus.